The following is a 671-amino-acid chain: DNA ligase (671 aa).

Residues D32–D36, S81–L82, and E113 each bind NAD(+). K115 serves as the catalytic N6-AMP-lysine intermediate. The NAD(+) site is built by R136, E173, K290, and K314. Zn(2+) is bound by residues C408, C411, C426, and C432. The 79-residue stretch at E593–S671 folds into the BRCT domain.

The protein belongs to the NAD-dependent DNA ligase family. LigA subfamily. It depends on Mg(2+) as a cofactor. Mn(2+) serves as cofactor.

It carries out the reaction NAD(+) + (deoxyribonucleotide)n-3'-hydroxyl + 5'-phospho-(deoxyribonucleotide)m = (deoxyribonucleotide)n+m + AMP + beta-nicotinamide D-nucleotide.. Its function is as follows. DNA ligase that catalyzes the formation of phosphodiester linkages between 5'-phosphoryl and 3'-hydroxyl groups in double-stranded DNA using NAD as a coenzyme and as the energy source for the reaction. It is essential for DNA replication and repair of damaged DNA. The chain is DNA ligase from Escherichia coli O9:H4 (strain HS).